Reading from the N-terminus, the 120-residue chain is NAD(P)H-quinone oxidoreductase subunit 3 (120 aa).

Helical transmembrane passes span 1 to 21 (MFVL…SLVP), 64 to 84 (MFAL…PWAV), and 89 to 109 (LGLL…VALV).

This sequence belongs to the complex I subunit 3 family. In terms of assembly, NDH-1 can be composed of about 15 different subunits; different subcomplexes with different compositions have been identified which probably have different functions.

It is found in the cellular thylakoid membrane. It catalyses the reaction a plastoquinone + NADH + (n+1) H(+)(in) = a plastoquinol + NAD(+) + n H(+)(out). The enzyme catalyses a plastoquinone + NADPH + (n+1) H(+)(in) = a plastoquinol + NADP(+) + n H(+)(out). In terms of biological role, NDH-1 shuttles electrons from an unknown electron donor, via FMN and iron-sulfur (Fe-S) centers, to quinones in the respiratory and/or the photosynthetic chain. The immediate electron acceptor for the enzyme in this species is believed to be plastoquinone. Couples the redox reaction to proton translocation, and thus conserves the redox energy in a proton gradient. Cyanobacterial NDH-1 also plays a role in inorganic carbon-concentration. This chain is NAD(P)H-quinone oxidoreductase subunit 3, found in Nostoc punctiforme (strain ATCC 29133 / PCC 73102).